The chain runs to 168 residues: Peptide deformylase 2 (168 aa).

Fe cation-binding residues include Cys-91 and His-133. Glu-134 is a catalytic residue. Position 137 (His-137) interacts with Fe cation.

The protein belongs to the polypeptide deformylase family. It depends on Fe(2+) as a cofactor.

The catalysed reaction is N-terminal N-formyl-L-methionyl-[peptide] + H2O = N-terminal L-methionyl-[peptide] + formate. Removes the formyl group from the N-terminal Met of newly synthesized proteins. Requires at least a dipeptide for an efficient rate of reaction. N-terminal L-methionine is a prerequisite for activity but the enzyme has broad specificity at other positions. In Vibrio parahaemolyticus serotype O3:K6 (strain RIMD 2210633), this protein is Peptide deformylase 2.